The sequence spans 930 residues: Isoleucine--tRNA ligase (930 aa).

Positions Pro57–His67 match the 'HIGH' region motif. An L-isoleucyl-5'-AMP-binding site is contributed by Glu554. The 'KMSKS' region signature appears at Lys595–Ser599. Lys598 is an ATP binding site. Residues Cys888, Cys891, Cys908, and Cys911 each coordinate Zn(2+).

Belongs to the class-I aminoacyl-tRNA synthetase family. IleS type 1 subfamily. Monomer. The cofactor is Zn(2+).

The protein resides in the cytoplasm. The catalysed reaction is tRNA(Ile) + L-isoleucine + ATP = L-isoleucyl-tRNA(Ile) + AMP + diphosphate. Functionally, catalyzes the attachment of isoleucine to tRNA(Ile). As IleRS can inadvertently accommodate and process structurally similar amino acids such as valine, to avoid such errors it has two additional distinct tRNA(Ile)-dependent editing activities. One activity is designated as 'pretransfer' editing and involves the hydrolysis of activated Val-AMP. The other activity is designated 'posttransfer' editing and involves deacylation of mischarged Val-tRNA(Ile). The chain is Isoleucine--tRNA ligase from Streptococcus pneumoniae (strain Taiwan19F-14).